Consider the following 543-residue polypeptide: Ribonuclease Y (543 aa).

A helical membrane pass occupies residues 4-24; sequence IIMIPVATAIVSLLVGTVIGY. A KH domain is found at 233–296; sequence TVSVVDLPNE…EIAKRAMERL (64 aa). Residues 359 to 452 form the HD domain; sequence VLSHSIEVGK…VVAADTISSA (94 aa).

The protein belongs to the RNase Y family.

It localises to the cell membrane. Endoribonuclease that initiates mRNA decay. This chain is Ribonuclease Y, found in Lactobacillus helveticus (strain DPC 4571).